Consider the following 333-residue polypeptide: Ribosomal RNA small subunit methyltransferase H (333 aa).

S-adenosyl-L-methionine contacts are provided by residues 43–45, Asp-62, Tyr-89, Asp-110, and Gln-117; that span reads GGH. The tract at residues 312-333 is disordered; that stretch reads RLRAARRIRTTPTRPSPRRRRP.

This sequence belongs to the methyltransferase superfamily. RsmH family.

The protein localises to the cytoplasm. It catalyses the reaction cytidine(1402) in 16S rRNA + S-adenosyl-L-methionine = N(4)-methylcytidine(1402) in 16S rRNA + S-adenosyl-L-homocysteine + H(+). In terms of biological role, specifically methylates the N4 position of cytidine in position 1402 (C1402) of 16S rRNA. The protein is Ribosomal RNA small subunit methyltransferase H of Beutenbergia cavernae (strain ATCC BAA-8 / DSM 12333 / CCUG 43141 / JCM 11478 / NBRC 16432 / NCIMB 13614 / HKI 0122).